A 453-amino-acid chain; its full sequence is Protein IVY1 (453 aa).

The segment covering 1–16 has biased composition (polar residues); sequence MPDNNTEQLQGSPSSD. The segment at 1-20 is disordered; sequence MPDNNTEQLQGSPSSDQRLR. Phosphoserine is present on residues serine 59, serine 84, and serine 85. Coiled coils occupy residues 102 to 122 and 230 to 257; these read KRDV…SNAY and IRNL…KHDF. 2 disordered regions span residues 316–340 and 353–453; these read DGPY…EETG and TSQP…SSNI. Phosphoserine is present on serine 335. The span at 353–371 shows a compositional bias: low complexity; the sequence is TSQPSTSKTSLPKSKGSST. 2 stretches are compositionally biased toward polar residues: residues 372 to 384 and 404 to 429; these read VSTP…SSNK and LMGT…TFKQ. Basic and acidic residues predominate over residues 431–442; sequence SIKEDNDNHSSD. A compositionally biased stretch (polar residues) spans 443–453; the sequence is TDGMQDQSSNI.

Homomultimer. Interacts with YPT7 and VPS33.

Its subcellular location is the vacuole membrane. May be required for vacuolar fusion. Overexpression leads to fragmentation of vacuoles, missorting of the vacuolar enzyme carboxypeptidase Y (CPY) to the exterior of the cell and accumulation of multivesicular bodies inside the cell. In Saccharomyces cerevisiae (strain ATCC 204508 / S288c) (Baker's yeast), this protein is Protein IVY1 (IVY1).